Reading from the N-terminus, the 344-residue chain is L-rhamnose-proton symporter (344 aa).

Helical transmembrane passes span 4–24 (AITM…CFYA), 38–58 (WSVG…ALLL), 68–88 (FNLS…IGNI), 101–121 (MGIG…TPII), 137–157 (TLLG…AGQL), 175–195 (LLLA…MNAA), 214–234 (LPSY…FCFI), 259–279 (ILLS…YAWG), 290–310 (MSWM…GLVL), and 321–341 (VAVL…VGLG).

The protein belongs to the L-rhamnose transporter (TC 2.A.7.6) family.

It is found in the cell inner membrane. It catalyses the reaction L-rhamnopyranose(in) + H(+)(in) = L-rhamnopyranose(out) + H(+)(out). Uptake of L-rhamnose across the cytoplasmic membrane with the concomitant transport of protons into the cell (symport system). The protein is L-rhamnose-proton symporter of Salmonella dublin (strain CT_02021853).